The following is a 194-amino-acid chain: Lectin-C (194 aa).

An N-terminal signal peptide occupies residues 1 to 26 (MKRSNSIAVMLVLVLSSLMLLLPVEG). The propeptide at 27–44 (QGHEGHGVGEILLMGKLG) is removed in mature form. 3 consecutive Chitin-binding type-1 domains span residues 45–86 (APVC…QCDY), 87–127 (NRCG…QCSY), and 128–168 (WRCG…QCDL). Cystine bridges form between Cys48/Cys63, Cys57/Cys69, Cys62/Cys76, Cys80/Cys84, Cys89/Cys104, Cys98/Cys110, Cys103/Cys117, Cys121/Cys125, Cys130/Cys145, Cys139/Cys151, Cys144/Cys158, and Cys162/Cys166. The propeptide at 171–194 (LLPSPLRRIIAIRKLKANLANMLS) is removed in mature form.

Homodimer. The homodimers are asymmetric; formed in a 'head-to-tail' fashion via hydrophobic interactions between aromatic residues of the carbohydrate-binding sites of each subunit.

In terms of biological role, N-acetyl-D-glucosamine binding lectin. Almost no hemagglutinating activity towards human erythrocytes. Low mitogenic activity towards human peripheral blood lymphocytes. The polypeptide is Lectin-C (Phytolacca americana (American pokeweed)).